Reading from the N-terminus, the 441-residue chain is Probable indole-3-acetic acid-amido synthetase GH3.9 (441 aa).

Belongs to the IAA-amido conjugating enzyme family. As to expression, expressed in etiolated seedlings and roots.

Its function is as follows. May catalyze the synthesis of indole-3-acetic acid (IAA)-amino acid conjugates, providing a mechanism for the plant to cope with the presence of excess auxin. This Oryza sativa subsp. japonica (Rice) protein is Probable indole-3-acetic acid-amido synthetase GH3.9 (GH3.9).